We begin with the raw amino-acid sequence, 230 residues long: Probable caffeoyl-CoA O-methyltransferase 1 (230 aa).

S-adenosyl-L-methionine contacts are provided by residues T52, D74, 76-77 (GV), S82, D100, A129, D151, D153, and Y160. Position 151 (D151) interacts with a divalent metal cation. Residues D177 and N178 each coordinate a divalent metal cation.

The protein belongs to the class I-like SAM-binding methyltransferase superfamily. Cation-dependent O-methyltransferase family. CCoAMT subfamily.

It carries out the reaction (E)-caffeoyl-CoA + S-adenosyl-L-methionine = (E)-feruloyl-CoA + S-adenosyl-L-homocysteine + H(+). In Dictyostelium discoideum (Social amoeba), this protein is Probable caffeoyl-CoA O-methyltransferase 1 (omt5).